Here is a 218-residue protein sequence, read N- to C-terminus: Ras-related protein Rab-4A (218 aa).

6 residues coordinate GDP: glycine 23, threonine 24, glycine 25, lysine 26, serine 27, and cysteine 28. Glycine 23, threonine 24, glycine 25, lysine 26, serine 27, cysteine 28, serine 42, histidine 44, and threonine 45 together coordinate GTP. Serine 27 is a Mg(2+) binding site. The short motif at 44 to 49 is the Switch 1 element; sequence HTIGVE. Mg(2+) contacts are provided by threonine 45 and aspartate 68. Residues 70–79 carry the Switch 2 motif; it reads AGQERFRSVT. Glycine 71 is a binding site for GTP. Residue glutamine 72 is modified to 5-glutamyl serotonin. Residues asparagine 126, lysine 127, aspartate 129, alanine 157, and leucine 158 each coordinate GDP. Residues asparagine 126, lysine 127, aspartate 129, alanine 157, and leucine 158 each contribute to the GTP site. Position 190 is a phosphoserine (serine 190). Serine 204 carries the phosphoserine; by CDK1 modification. 2 S-geranylgeranyl cysteine lipidation sites follow: cysteine 216 and cysteine 218. Cysteine methyl ester is present on cysteine 218.

The protein belongs to the small GTPase superfamily. Rab family. Interacts with SGSM1, SGSM2 and SGSM3. Interacts with RAB11FIP1, RABEP1, ZFYVE20 and RUFY1. Interacts (membrane-bound form) with NDRG1; the interaction involves NDRG1 in vesicular recycling of E-cadherin. Interacts (in GTP-bound form) with GRIPAP1 (via N-terminus). Interacts with RABEP1 and RBSN. Does not interact with HPS4. Interacts with RABEP2; this interaction may mediate VEGFR2 cell surface expression. It depends on Mg(2+) as a cofactor. Phosphorylated by CDK1 kinase during mitosis. In terms of processing, serotonylation of Gln-72 by TGM2 during activation and aggregation of platelets leads to constitutive activation of GTPase activity.

The protein resides in the membrane. The protein localises to the cytoplasm. It is found in the early endosome membrane. Its subcellular location is the recycling endosome membrane. The enzyme catalyses GTP + H2O = GDP + phosphate + H(+). With respect to regulation, regulated by guanine nucleotide exchange factors (GEFs) which promote the exchange of bound GDP for free GTP. Regulated by GTPase activating proteins (GAPs) which increase the GTP hydrolysis activity. Inhibited by GDP dissociation inhibitors (GDIs). Its function is as follows. The small GTPases Rab are key regulators of intracellular membrane trafficking, from the formation of transport vesicles to their fusion with membranes. Rabs cycle between an inactive GDP-bound form and an active GTP-bound form that is able to recruit to membranes different sets of downstream effectors directly responsible for vesicle formation, movement, tethering and fusion. RAB4A is involved in protein transport. Also plays a role in vesicular traffic. Mediates VEGFR2 endosomal trafficking to enhance VEGFR2 signaling. Acts as a regulator of platelet alpha-granule release during activation and aggregation of platelets. The sequence is that of Ras-related protein Rab-4A from Homo sapiens (Human).